Consider the following 840-residue polypeptide: Aconitase AMT8 (840 aa).

258 to 260 contacts substrate; it reads DSH. [4Fe-4S] cluster is bound by residues Cys450, Cys513, and Cys516. Residues Arg536, Arg541, and 709–710 each bind substrate; that span reads SR.

Belongs to the aconitase/IPM isomerase family.

It functions in the pathway mycotoxin biosynthesis. Functionally, aconitase; part of the gene clusters that mediate the biosynthesis of AM-toxins, host-selective toxins (HSTs) causing Alternaria blotch on apple, a worldwide distributed disease. AM-toxins are cyclic depsipeptides containing the 3 residues 2-hydroxy-isovaleric acid (2-HIV), dehydroalanine, L-alanine which are common for all 3 AM-toxins I to III. The fourth precursor is L-alpha-amino-methoxyphenyl-valeric acid (L-Amv) for AM-toxin I, L-alpha-amino-phenyl-valeric acid (L-Apv) for AM-toxin II, and L-alpha-amino-hydroxyphenyl-valeric acid (L-Ahv) for AM-toxin III. AM-toxins have two target sites for affecting susceptible apple cells; they cause invagination of the plasma membrane and electrolyte loss and chloroplast disorganization. The non-ribosomal peptide synthetase AMT1 contains 4 catalytic modules and is responsible for activation of each residue in AM-toxin. The aldo-keto reductase AMT2 catalyzes the conversion of 2-keto-isovaleric acid (2-KIV) to 2-hydroxy-isovaleric acid (2-HIV), one of the precursor residues incorporated by AMT1 during AM-toxin biosynthesis, by reduction of its ketone to an alcohol. The cytochrome P450 monooxygenase AMT3 and the thioesterase AMT4 are also important for AM-toxin production, but their exact function within the AM-toxin biosynthesis are not known yet. Up to 21 proteins (including AMT1 to AMT4) are predicted to be involved in AM-toxin biosynthesis since their expression ishighly up-regulated in AM-toxin-producing cultures. This is Aconitase AMT8 from Alternaria alternata (Alternaria rot fungus).